The sequence spans 219 residues: Urease subunit gamma/beta (219 aa).

The segment at 1 to 101 (MFLTPREQEK…LVTVRNPIKS (101 aa)) is urease gamma. The urease beta stretch occupies residues 102-219 (SKKTLNTYII…IKRAKERGFA (118 aa)).

The protein in the N-terminal section; belongs to the urease gamma subunit family. It in the C-terminal section; belongs to the urease beta subunit family. In terms of assembly, heterohexamer of 3 UreC (alpha) and 3 UreAB (gamma/beta) subunits.

It is found in the cytoplasm. The enzyme catalyses urea + 2 H2O + H(+) = hydrogencarbonate + 2 NH4(+). Its pathway is nitrogen metabolism; urea degradation; CO(2) and NH(3) from urea (urease route): step 1/1. The polypeptide is Urease subunit gamma/beta (Sulfurisphaera tokodaii (strain DSM 16993 / JCM 10545 / NBRC 100140 / 7) (Sulfolobus tokodaii)).